The chain runs to 116 residues: PTS system cellobiose-specific EIIA component (116 aa).

Residues 11 to 109 (DDYMGVVMGI…AVEVVGQEQR (99 aa)) form the PTS EIIA type-3 domain. The active-site Tele-phosphohistidine intermediate is histidine 85. Position 85 is a phosphohistidine; by HPr (histidine 85). Aspartate 88 contacts Mg(2+).

As to quaternary structure, homotrimer. The cofactor is Mg(2+).

In terms of biological role, the phosphoenolpyruvate-dependent sugar phosphotransferase system (sugar PTS), a major carbohydrate active transport system, catalyzes the phosphorylation of incoming sugar substrates concomitantly with their translocation across the cell membrane. Involved in cellobiose transport with PtcB and CelB. This system can also transport lactose. This Lactococcus lactis subsp. lactis (strain IL1403) (Streptococcus lactis) protein is PTS system cellobiose-specific EIIA component.